Reading from the N-terminus, the 237-residue chain is Fluoroquinolones export permease protein MT2761 (237 aa).

6 helical membrane-spanning segments follow: residues 20–40 (FLHA…PMPV), 49–69 (YVLV…TVFF), 96–116 (VLLA…HGLG), 119–139 (LLPL…VGFS), 147–167 (VTDW…PPVV), and 199–219 (LAPW…AGLC).

In terms of assembly, the complex is composed of 2 ATP-binding proteins and 2 transmembrane proteins.

Its subcellular location is the cell membrane. Part of the ABC transporter complex involved in fluoroquinolones export. Probably responsible for the translocation of the substrate across the membrane. This is Fluoroquinolones export permease protein MT2761 from Mycobacterium tuberculosis (strain CDC 1551 / Oshkosh).